Consider the following 585-residue polypeptide: Arginine--tRNA ligase (585 aa).

A 'HIGH' region motif is present at residues 131 to 141 (ANPTGPMHVGH).

It belongs to the class-I aminoacyl-tRNA synthetase family. Monomer.

It localises to the cytoplasm. The enzyme catalyses tRNA(Arg) + L-arginine + ATP = L-arginyl-tRNA(Arg) + AMP + diphosphate. In Rhizobium meliloti (strain 1021) (Ensifer meliloti), this protein is Arginine--tRNA ligase.